The following is a 150-amino-acid chain: 16 kDa phloem protein 1 (150 aa).

A C2 domain is found at 1–108; the sequence is MGMGMMEVHL…LAEGVRKGKS (108 aa). Positions 20, 27, 78, 80, and 86 each coordinate Ca(2+).

It depends on Ca(2+) as a cofactor. As to expression, sieve elements of leaves, stems, roots and flowers.

In terms of biological role, binds to both sense and antisense RNA. Interacts with mesophyll plasmodesmata to mediate its own cell-to-cell transport and potentiate RNA trafficking. The sequence is that of 16 kDa phloem protein 1 (PP16-1) from Cucurbita maxima (Pumpkin).